The chain runs to 74 residues: Insertion element IS986 uncharacterized 8.2 kDa protein (74 aa).

The protein is Insertion element IS986 uncharacterized 8.2 kDa protein of Mycobacterium tuberculosis.